The chain runs to 364 residues: Sec-independent protein translocase protein TatC (364 aa).

Transmembrane regions (helical) follow at residues I42–F62, M107–T127, L139–T159, L160–D180, I194–V214, P225–T245, and M246–L266. Residues T277–T364 are disordered. The span at D282–D295 shows a compositional bias: acidic residues. Low complexity predominate over residues A301–G320. Polar residues predominate over residues P324–P344.

This sequence belongs to the TatC family. The Tat system comprises two distinct complexes: a TatABC complex, containing multiple copies of TatA, TatB and TatC subunits, and a separate TatA complex, containing only TatA subunits. Substrates initially bind to the TatABC complex, which probably triggers association of the separate TatA complex to form the active translocon.

It localises to the cell membrane. Part of the twin-arginine translocation (Tat) system that transports large folded proteins containing a characteristic twin-arginine motif in their signal peptide across membranes. Together with TatB, TatC is part of a receptor directly interacting with Tat signal peptides. The protein is Sec-independent protein translocase protein TatC of Frankia casuarinae (strain DSM 45818 / CECT 9043 / HFP020203 / CcI3).